The primary structure comprises 617 residues: Proline--tRNA ligase (617 aa).

It belongs to the class-II aminoacyl-tRNA synthetase family. ProS type 1 subfamily. In terms of assembly, homodimer.

The protein localises to the cytoplasm. The catalysed reaction is tRNA(Pro) + L-proline + ATP = L-prolyl-tRNA(Pro) + AMP + diphosphate. In terms of biological role, catalyzes the attachment of proline to tRNA(Pro) in a two-step reaction: proline is first activated by ATP to form Pro-AMP and then transferred to the acceptor end of tRNA(Pro). As ProRS can inadvertently accommodate and process non-cognate amino acids such as alanine and cysteine, to avoid such errors it has two additional distinct editing activities against alanine. One activity is designated as 'pretransfer' editing and involves the tRNA(Pro)-independent hydrolysis of activated Ala-AMP. The other activity is designated 'posttransfer' editing and involves deacylation of mischarged Ala-tRNA(Pro). The misacylated Cys-tRNA(Pro) is not edited by ProRS. This Streptococcus pneumoniae (strain 70585) protein is Proline--tRNA ligase.